A 407-amino-acid chain; its full sequence is 4-hydroxy-3-methylbut-2-en-1-yl diphosphate synthase (ferredoxin) (407 aa).

The [4Fe-4S] cluster site is built by Cys-312, Cys-315, Cys-346, and Glu-353.

It belongs to the IspG family. It depends on [4Fe-4S] cluster as a cofactor.

The enzyme catalyses (2E)-4-hydroxy-3-methylbut-2-enyl diphosphate + 2 oxidized [2Fe-2S]-[ferredoxin] + H2O = 2-C-methyl-D-erythritol 2,4-cyclic diphosphate + 2 reduced [2Fe-2S]-[ferredoxin] + H(+). Its pathway is isoprenoid biosynthesis; isopentenyl diphosphate biosynthesis via DXP pathway; isopentenyl diphosphate from 1-deoxy-D-xylulose 5-phosphate: step 5/6. In terms of biological role, converts 2C-methyl-D-erythritol 2,4-cyclodiphosphate (ME-2,4cPP) into 1-hydroxy-2-methyl-2-(E)-butenyl 4-diphosphate. The polypeptide is 4-hydroxy-3-methylbut-2-en-1-yl diphosphate synthase (ferredoxin) (Synechococcus elongatus (strain ATCC 33912 / PCC 7942 / FACHB-805) (Anacystis nidulans R2)).